Here is a 314-residue protein sequence, read N- to C-terminus: BTB/POZ domain-containing protein KCTD17 (314 aa).

Residues 24–94 (KWVRLNVGGT…LRHGKLVLDK (71 aa)) enclose the BTB domain. A disordered region spans residues 190 to 268 (STPNGLSSES…PAGGSRPHPL (79 aa)). A coiled-coil region spans residues 196 to 239 (SSESSRKTKSTEEQLEEQQQQEEEVEEVEVEQVQVEADAQEKAQ). Positions 208–225 (EQLEEQQQQEEEVEEVEV) are enriched in acidic residues.

As to quaternary structure, homopentamer; forms a closed pentamer. Interacts with CUL3; interaction is direct and forms a 5:5 heterodecamer. Interacts with TCHP. Interacts with CUL3, as part of the BCR(KCTD17) E3 ubiquitin ligase complex, at least composed of CUL3, KCTD17 and RBX1. In terms of tissue distribution, highly expressed in brain. Highest expression is observed in the putamen and the thalamus.

It localises to the cytoplasm. Substrate-adapter for CUL3-RING ubiquitin ligase complexes which mediates the ubiquitination and subsequent proteasomal degradation of TCHP, a protein involved in ciliogenesis down-regulation. Thereby, positively regulates ciliogenesis, playing a crucial role in the initial steps of axoneme extension. May also play a role in endoplasmic reticulum calcium ion homeostasis. This chain is BTB/POZ domain-containing protein KCTD17, found in Homo sapiens (Human).